Consider the following 144-residue polypeptide: tRNA-specific adenosine deaminase (144 aa).

The CMP/dCMP-type deaminase domain occupies 1–116 (MEQALKQAGI…SNLRYFNSSV (116 aa)). His-48 provides a ligand contact to Zn(2+). Catalysis depends on Glu-50, which acts as the Proton donor. Residues Cys-78 and Cys-81 each coordinate Zn(2+).

Belongs to the cytidine and deoxycytidylate deaminase family. As to quaternary structure, homodimer. Requires Zn(2+) as cofactor.

It catalyses the reaction adenosine(34) in tRNA + H2O + H(+) = inosine(34) in tRNA + NH4(+). Its function is as follows. Catalyzes the deamination of adenosine to inosine at the wobble position 34 of tRNA(Arg2). The chain is tRNA-specific adenosine deaminase from Rickettsia felis (strain ATCC VR-1525 / URRWXCal2) (Rickettsia azadi).